A 281-amino-acid chain; its full sequence is Release factor glutamine methyltransferase (281 aa).

E141 and N185 together coordinate S-adenosyl-L-methionine. 185–188 (NPPY) contributes to the substrate binding site.

It belongs to the protein N5-glutamine methyltransferase family. PrmC subfamily.

It carries out the reaction L-glutaminyl-[peptide chain release factor] + S-adenosyl-L-methionine = N(5)-methyl-L-glutaminyl-[peptide chain release factor] + S-adenosyl-L-homocysteine + H(+). In terms of biological role, methylates the class 1 translation termination release factors RF1/PrfA and RF2/PrfB on the glutamine residue of the universally conserved GGQ motif. The chain is Release factor glutamine methyltransferase from Mycolicibacterium smegmatis (strain ATCC 700084 / mc(2)155) (Mycobacterium smegmatis).